A 179-amino-acid polypeptide reads, in one-letter code: MLRFKELYQQKIIENLQKKFSYKNKHEIPQIKKIVINMGVGEATADSKVINNAVNDLTLISGQKPVVTLARKSIATFKLRENMKIGCKVTLRKDRMYDFLERLVIVALPRVKEFRGFSYKSFDGKGNFTFGLKEQIVFPEINYDKIDTIRGMDITIVTSAKTDQESKFLLSGFNLPFYN.

Belongs to the universal ribosomal protein uL5 family. In terms of assembly, part of the 50S ribosomal subunit; part of the 5S rRNA/L5/L18/L25 subcomplex. Contacts the 5S rRNA and the P site tRNA. Forms a bridge to the 30S subunit in the 70S ribosome.

This is one of the proteins that bind and probably mediate the attachment of the 5S RNA into the large ribosomal subunit, where it forms part of the central protuberance. In the 70S ribosome it contacts protein S13 of the 30S subunit (bridge B1b), connecting the 2 subunits; this bridge is implicated in subunit movement. Contacts the P site tRNA; the 5S rRNA and some of its associated proteins might help stabilize positioning of ribosome-bound tRNAs. In Rickettsia africae (strain ESF-5), this protein is Large ribosomal subunit protein uL5.